The primary structure comprises 238 residues: CBS domain-containing protein CBSX2, chloroplastic (238 aa).

The N-terminal 71 residues, 1–71, are a transit peptide targeting the chloroplast; it reads MGSISLSNSM…ASVNNNNSVP (71 aa). CBS domains are found at residues 83–145 and 177–234; these read MTPR…QNDT and MTPS…KRET.

The protein resides in the plastid. Its subcellular location is the chloroplast stroma. The protein is CBS domain-containing protein CBSX2, chloroplastic (CBSX2) of Arabidopsis thaliana (Mouse-ear cress).